A 211-amino-acid polypeptide reads, in one-letter code: Large ribosomal subunit protein uL4 (211 aa).

The interval 50–77 is disordered; that stretch reads STLTKGEVSGGGKKPYKQKHTGKARQGS. A compositionally biased stretch (basic residues) spans 63-72; that stretch reads KPYKQKHTGK.

The protein belongs to the universal ribosomal protein uL4 family. In terms of assembly, part of the 50S ribosomal subunit.

One of the primary rRNA binding proteins, this protein initially binds near the 5'-end of the 23S rRNA. It is important during the early stages of 50S assembly. It makes multiple contacts with different domains of the 23S rRNA in the assembled 50S subunit and ribosome. Functionally, forms part of the polypeptide exit tunnel. The polypeptide is Large ribosomal subunit protein uL4 (Mycoplasma genitalium (strain ATCC 33530 / DSM 19775 / NCTC 10195 / G37) (Mycoplasmoides genitalium)).